Here is a 226-residue protein sequence, read N- to C-terminus: Phosphoribosylformylglycinamidine synthase subunit PurQ (226 aa).

Residues 4–226 (RIGVVTFPGS…TSILKKLVNA (223 aa)) form the Glutamine amidotransferase type-1 domain. Catalysis depends on Cys-87, which acts as the Nucleophile. Active-site residues include His-196 and Glu-198.

Part of the FGAM synthase complex composed of 1 PurL, 1 PurQ and 2 PurS subunits.

The protein localises to the cytoplasm. It catalyses the reaction N(2)-formyl-N(1)-(5-phospho-beta-D-ribosyl)glycinamide + L-glutamine + ATP + H2O = 2-formamido-N(1)-(5-O-phospho-beta-D-ribosyl)acetamidine + L-glutamate + ADP + phosphate + H(+). It carries out the reaction L-glutamine + H2O = L-glutamate + NH4(+). It functions in the pathway purine metabolism; IMP biosynthesis via de novo pathway; 5-amino-1-(5-phospho-D-ribosyl)imidazole from N(2)-formyl-N(1)-(5-phospho-D-ribosyl)glycinamide: step 1/2. Functionally, part of the phosphoribosylformylglycinamidine synthase complex involved in the purines biosynthetic pathway. Catalyzes the ATP-dependent conversion of formylglycinamide ribonucleotide (FGAR) and glutamine to yield formylglycinamidine ribonucleotide (FGAM) and glutamate. The FGAM synthase complex is composed of three subunits. PurQ produces an ammonia molecule by converting glutamine to glutamate. PurL transfers the ammonia molecule to FGAR to form FGAM in an ATP-dependent manner. PurS interacts with PurQ and PurL and is thought to assist in the transfer of the ammonia molecule from PurQ to PurL. The sequence is that of Phosphoribosylformylglycinamidine synthase subunit PurQ from Streptomyces coelicolor (strain ATCC BAA-471 / A3(2) / M145).